A 258-amino-acid polypeptide reads, in one-letter code: MTAPPRIAFLASPAEPAVAARARLVQRFGDHALDCADIVCALGGDGFMLQTLHRHGASNKPVFGMKLGSVGFLMNQYRDDEDDLLERLQRAEPAYLRPLEMQVQTESGASAGSLAYNEVSLLRQTRQAAHLSIDLNGQTRIAELIGDGVMVATPAGSTAYNYSAHGPILPLGSHTLALTPIAPYRPRRWRGAILKADTAVRFRVLDPYKRPVSVTADSHEIRDVVEVTIRESTQRQVTLLFDPEHNLEERIFSEQFAV.

Asp-45 functions as the Proton acceptor in the catalytic mechanism. Residues 45–46 (DG), 117–118 (NE), Asp-147, Ala-155, 158–163 (TAYNYS), and Ala-182 contribute to the NAD(+) site.

The protein belongs to the NAD kinase family. The cofactor is a divalent metal cation.

It localises to the cytoplasm. The enzyme catalyses NAD(+) + ATP = ADP + NADP(+) + H(+). Functionally, involved in the regulation of the intracellular balance of NAD and NADP, and is a key enzyme in the biosynthesis of NADP. Catalyzes specifically the phosphorylation on 2'-hydroxyl of the adenosine moiety of NAD to yield NADP. The sequence is that of NAD kinase from Xanthomonas oryzae pv. oryzae (strain MAFF 311018).